The primary structure comprises 338 residues: DNA fragmentation factor subunit beta (338 aa).

Residues 4–80 (KPKSVKLRAL…LLTLGQAWQG (77 aa)) enclose the CIDE-N domain.

Heterodimer of DFFA and DFFB. Interacts with H1-1.

It is found in the cytoplasm. The protein localises to the nucleus. With respect to regulation, inhibited by DFFA (DFF45). Functionally, nuclease that induces DNA fragmentation and chromatin condensation during apoptosis. Degrades naked DNA and induces apoptotic morphology. The polypeptide is DNA fragmentation factor subunit beta (DFFB) (Homo sapiens (Human)).